A 248-amino-acid polypeptide reads, in one-letter code: Small ribosomal subunit protein eS1 (248 aa).

The tract at residues 1–21 (MAVGKDKRISKGKKGGKKKIV) is disordered.

This sequence belongs to the eukaryotic ribosomal protein eS1 family. In terms of assembly, component of the small ribosomal subunit. Mature ribosomes consist of a small (40S) and a large (60S) subunit. The 40S subunit contains about 33 different proteins and 1 molecule of RNA (18S). The 60S subunit contains about 49 different proteins and 3 molecules of RNA (25S, 5.8S and 5S).

Its subcellular location is the cytoplasm. The sequence is that of Small ribosomal subunit protein eS1 from Syntrichia ruralis (Great hairy screw-moss).